The primary structure comprises 71 residues: UPF0346 protein SUB0487 (71 aa).

It belongs to the UPF0346 family.

This Streptococcus uberis (strain ATCC BAA-854 / 0140J) protein is UPF0346 protein SUB0487.